Reading from the N-terminus, the 577-residue chain is 2-succinyl-5-enolpyruvyl-6-hydroxy-3-cyclohexene-1-carboxylate synthase (577 aa).

Belongs to the TPP enzyme family. MenD subfamily. As to quaternary structure, homodimer. Mg(2+) serves as cofactor. Requires Mn(2+) as cofactor. Thiamine diphosphate is required as a cofactor.

It carries out the reaction isochorismate + 2-oxoglutarate + H(+) = 5-enolpyruvoyl-6-hydroxy-2-succinyl-cyclohex-3-ene-1-carboxylate + CO2. Its pathway is quinol/quinone metabolism; 1,4-dihydroxy-2-naphthoate biosynthesis; 1,4-dihydroxy-2-naphthoate from chorismate: step 2/7. The protein operates within quinol/quinone metabolism; menaquinone biosynthesis. Its function is as follows. Catalyzes the thiamine diphosphate-dependent decarboxylation of 2-oxoglutarate and the subsequent addition of the resulting succinic semialdehyde-thiamine pyrophosphate anion to isochorismate to yield 2-succinyl-5-enolpyruvyl-6-hydroxy-3-cyclohexene-1-carboxylate (SEPHCHC). The sequence is that of 2-succinyl-5-enolpyruvyl-6-hydroxy-3-cyclohexene-1-carboxylate synthase from Christiangramia forsetii (strain DSM 17595 / CGMCC 1.15422 / KT0803) (Gramella forsetii).